The primary structure comprises 1099 residues: ATP-dependent helicase/deoxyribonuclease subunit B (1099 aa).

4 residues coordinate [4Fe-4S] cluster: Cys766, Cys1056, Cys1059, and Cys1065.

This sequence belongs to the helicase family. AddB/RexB type 2 subfamily. Heterodimer of AddA and RexB. Mg(2+) is required as a cofactor. It depends on [4Fe-4S] cluster as a cofactor.

The heterodimer acts as both an ATP-dependent DNA helicase and an ATP-dependent, dual-direction single-stranded exonuclease. Recognizes the chi site generating a DNA molecule suitable for the initiation of homologous recombination. This subunit has 5' -&gt; 3' nuclease activity but not helicase activity. The sequence is that of ATP-dependent helicase/deoxyribonuclease subunit B from Lactococcus lactis subsp. lactis (strain IL1403) (Streptococcus lactis).